Consider the following 1228-residue polypeptide: Probable phospholipid-transporting ATPase 5 (1228 aa).

Over 1 to 74 (MARGRIRSKL…TTRYNLITFF (74 aa)) the chain is Cytoplasmic. A helical membrane pass occupies residues 75–96 (PKSLYEQFHRAANLYFLVAAIL). The Extracellular segment spans residues 97-100 (SVFP). Residues 101–123 (LSPFNKWSMIAPLVFVVGLSMLK) traverse the membrane as a helical segment. The Cytoplasmic portion of the chain corresponds to 124 to 305 (EALEDWRRFM…SRIERTMDYI (182 aa)). A helical transmembrane segment spans residues 306-327 (IYTLLVLLILISCISSSGFAWE). Topologically, residues 328–359 (TEFHMPKMWYLRPGEPIDFTNPINPIYAGVVH) are extracellular. The helical transmembrane segment at 360–377 (LITALLLYGYLIPISLYV) threads the bilayer. The Cytoplasmic portion of the chain corresponds to 378 to 934 (SIEVVKVWQA…HGHWCYKRIA (557 aa)). Asp425 (4-aspartylphosphate intermediate) is an active-site residue. Lys616 participates in a covalent cross-link: Glycyl lysine isopeptide (Lys-Gly) (interchain with G-Cter in ubiquitin). 2 residues coordinate Mg(2+): Asp879 and Asp883. A helical transmembrane segment spans residues 935-954 (QMICYFFYKNIAFGLTLFYF). Residues 955–968 (EAFTGFSGQSVYND) are Extracellular-facing. The chain crosses the membrane as a helical span at residues 969 to 988 (YYLLLFNVVLTSLPVIALGV). At 989–1018 (FEQDVSSEICLQFPALYQQGTKNLFFDWSR) the chain is on the cytoplasmic side. A helical transmembrane segment spans residues 1019–1041 (ILGWMCNGVYASLVIFFLNIGII). Over 1042–1054 (YSQAFRDNGQTAD) the chain is Extracellular. The chain crosses the membrane as a helical span at residues 1055–1077 (MDAVGTTMFTCIIWAANVQIALT). The Cytoplasmic portion of the chain corresponds to 1078 to 1083 (MSHFTW). A helical transmembrane segment spans residues 1084-1104 (IQHVLIWGSIGMWYLFVAIYS). The Extracellular portion of the chain corresponds to 1105-1117 (MMPPSYSGNIYRI). A helical membrane pass occupies residues 1118–1146 (LDEILAPAPIYWMATLLVTVAAVLPYVAH). Over 1147–1228 (IAFQRFLNPL…AQDAMSPRSL (82 aa)) the chain is Cytoplasmic.

The protein belongs to the cation transport ATPase (P-type) (TC 3.A.3) family. Type IV subfamily.

Its subcellular location is the membrane. The catalysed reaction is ATP + H2O + phospholipidSide 1 = ADP + phosphate + phospholipidSide 2.. Involved in transport of phospholipids. The sequence is that of Probable phospholipid-transporting ATPase 5 from Arabidopsis thaliana (Mouse-ear cress).